The chain runs to 717 residues: Fatty acid oxidation complex subunit alpha (717 aa).

Residues Met-1–Pro-190 are enoyl-CoA hydratase. Positions Arg-306–Val-717 are 3-hydroxyacyl-CoA dehydrogenase.

The protein in the N-terminal section; belongs to the enoyl-CoA hydratase/isomerase family. This sequence in the central section; belongs to the 3-hydroxyacyl-CoA dehydrogenase family. As to quaternary structure, heterotetramer of two alpha chains (FadJ) and two beta chains (FadI).

The protein localises to the cytoplasm. It catalyses the reaction a (3S)-3-hydroxyacyl-CoA = a (2E)-enoyl-CoA + H2O. It carries out the reaction a 4-saturated-(3S)-3-hydroxyacyl-CoA = a (3E)-enoyl-CoA + H2O. The catalysed reaction is a (3S)-3-hydroxyacyl-CoA + NAD(+) = a 3-oxoacyl-CoA + NADH + H(+). The enzyme catalyses (3S)-3-hydroxybutanoyl-CoA = (3R)-3-hydroxybutanoyl-CoA. The protein operates within lipid metabolism; fatty acid beta-oxidation. In terms of biological role, catalyzes the formation of a hydroxyacyl-CoA by addition of water on enoyl-CoA. Also exhibits 3-hydroxyacyl-CoA epimerase and 3-hydroxyacyl-CoA dehydrogenase activities. This Cronobacter sakazakii (strain ATCC BAA-894) (Enterobacter sakazakii) protein is Fatty acid oxidation complex subunit alpha.